A 632-amino-acid chain; its full sequence is Threonine--tRNA ligase (632 aa).

One can recognise a TGS domain in the interval 1–61; it reads MPIITLPDGT…KTDANLAIIT (61 aa). Residues 242-533 are catalytic; that stretch reads DHRKIGKIQD…LIEHYEGAYP (292 aa). Positions 333, 384, and 510 each coordinate Zn(2+).

It belongs to the class-II aminoacyl-tRNA synthetase family. In terms of assembly, homodimer. Zn(2+) serves as cofactor.

Its subcellular location is the cytoplasm. The catalysed reaction is tRNA(Thr) + L-threonine + ATP = L-threonyl-tRNA(Thr) + AMP + diphosphate + H(+). In terms of biological role, catalyzes the attachment of threonine to tRNA(Thr) in a two-step reaction: L-threonine is first activated by ATP to form Thr-AMP and then transferred to the acceptor end of tRNA(Thr). Also edits incorrectly charged L-seryl-tRNA(Thr). The protein is Threonine--tRNA ligase of Ruthia magnifica subsp. Calyptogena magnifica.